Consider the following 339-residue polypeptide: Aspartate carbamoyltransferase catalytic subunit (339 aa).

Positions 59 and 60 each coordinate carbamoyl phosphate. Residue lysine 87 participates in L-aspartate binding. 3 residues coordinate carbamoyl phosphate: arginine 109, histidine 142, and glutamine 145. L-aspartate contacts are provided by arginine 182 and arginine 253. The carbamoyl phosphate site is built by glycine 294 and proline 295.

The protein belongs to the aspartate/ornithine carbamoyltransferase superfamily. ATCase family. As to quaternary structure, heterododecamer (2C3:3R2) of six catalytic PyrB chains organized as two trimers (C3), and six regulatory PyrI chains organized as three dimers (R2).

The enzyme catalyses carbamoyl phosphate + L-aspartate = N-carbamoyl-L-aspartate + phosphate + H(+). The protein operates within pyrimidine metabolism; UMP biosynthesis via de novo pathway; (S)-dihydroorotate from bicarbonate: step 2/3. In terms of biological role, catalyzes the condensation of carbamoyl phosphate and aspartate to form carbamoyl aspartate and inorganic phosphate, the committed step in the de novo pyrimidine nucleotide biosynthesis pathway. This Prochlorococcus marinus (strain NATL1A) protein is Aspartate carbamoyltransferase catalytic subunit.